The following is a 106-amino-acid chain: Large ribosomal subunit protein uL24 (106 aa).

It belongs to the universal ribosomal protein uL24 family. In terms of assembly, part of the 50S ribosomal subunit.

Functionally, one of two assembly initiator proteins, it binds directly to the 5'-end of the 23S rRNA, where it nucleates assembly of the 50S subunit. Its function is as follows. One of the proteins that surrounds the polypeptide exit tunnel on the outside of the subunit. In Erythrobacter litoralis (strain HTCC2594), this protein is Large ribosomal subunit protein uL24.